Consider the following 226-residue polypeptide: Glutathione peroxidase 3 (226 aa).

The signal sequence occupies residues 1-24 (MARLLQASCLLSLLLAGFLPQSRG). Residue Sec-73 is part of the active site. Sec-73 is a non-standard amino acid (selenocysteine).

This sequence belongs to the glutathione peroxidase family. Homotetramer. Expressed intensively in the kidney and adrenal gland, and weakly in the cerebellum, heart, and lung. Secreted in plasma.

It localises to the secreted. The enzyme catalyses 2 glutathione + H2O2 = glutathione disulfide + 2 H2O. The catalysed reaction is tert-butyl hydroperoxide + 2 glutathione = tert-butanol + glutathione disulfide + H2O. Its function is as follows. Protects cells and enzymes from oxidative damage, by catalyzing the reduction of hydrogen peroxide, lipid peroxides and organic hydroperoxide, by glutathione. The chain is Glutathione peroxidase 3 from Macaca fuscata fuscata (Japanese macaque).